Reading from the N-terminus, the 361-residue chain is uncharacterized protein (361 aa).

WD repeat units lie at residues 57–96 (RHKKSCRNISVNESGTEFISVGSDGVLKIADTSTGRVSSK), 103–142 (KEISPYSVVQWIENDMVFATGDDNGCVSVWDKRTEGGIIH), 146–184 (DHIDYISSISPFEERYFVATSGDGVLSVIDARNFKKPIL), 187–229 (EQDE…DHTD), 237–275 (SHDFSIETITRADSDSLYVGGSDGCIRLLHILPNKYERI), and 280–318 (SSRSTVDAVDVTTEGNFLVSCSGTELAFWPVDQKEGDES). A disordered region spans residues 311–361 (DQKEGDESSSSDNLDSDEDSSSDSEFSSPKKKKKVGNQGKKPLGTDFFDGL).

Its subcellular location is the nucleus. The protein resides in the nucleolus. This is an uncharacterized protein from Schizosaccharomyces pombe (strain 972 / ATCC 24843) (Fission yeast).